Here is a 289-residue protein sequence, read N- to C-terminus: Probable aquaporin PIP2-6 (289 aa).

M1 carries the N-acetylmethionine modification. Residues 1–38 (MTKDELTEEESLSGKDYLDPPPVKTFEVRELKKWSFYR) are Cytoplasmic-facing. The residue at position 7 (T7) is a Phosphothreonine. Position 11 is a phosphoserine (S11). The helical transmembrane segment at 39–59 (AVIAEFIATLLFLYVTVLTVI) threads the bilayer. At 60–80 (GFKSQTDINAGGGACASVGLL) the chain is on the extracellular side. A helical membrane pass occupies residues 81-101 (GISWAFGGMIFILVYCTAGIS). Residues 102-124 (GGHINPAVTFGLFLASKVSLVRA) are Cytoplasmic-facing. The NPA 1 signature appears at 106-108 (NPA). Residues 125 to 145 (VSYMVAQCLGATCGVGLVKVF) traverse the membrane as a helical segment. The Extracellular segment spans residues 146–165 (QSTYYNRYGGGANMLSDGYN). A helical transmembrane segment spans residues 166 to 186 (VGVGVGAEIIGTFVLVYTVFS). Topologically, residues 187-200 (ATDPKRNARDSHIP) are cytoplasmic. The chain crosses the membrane as a helical span at residues 201-221 (VLAPLPIGFSVFMVHLATIPI). Residues 222 to 248 (TGTGINPARSFGAAVIYNNQKAWDDQW) are Extracellular-facing. The NPA 2 signature appears at 227 to 229 (NPA). Residues 249–269 (IFWVGPFVGAAIAAFYHQFVL) form a helical membrane-spanning segment. Topologically, residues 270-289 (RAGAMKAYGSVRSQLHELHA) are cytoplasmic. S279 and S282 each carry phosphoserine.

It belongs to the MIP/aquaporin (TC 1.A.8) family. PIP (TC 1.A.8.11) subfamily. In terms of tissue distribution, expressed above ground, and in flower buds.

Its subcellular location is the cell membrane. In terms of biological role, aquaporins facilitate the transport of water and small neutral solutes across cell membranes. This chain is Probable aquaporin PIP2-6 (PIP2-6), found in Arabidopsis thaliana (Mouse-ear cress).